We begin with the raw amino-acid sequence, 145 residues long: Large ribosomal subunit protein uL11 (145 aa).

The protein belongs to the universal ribosomal protein uL11 family. Part of the ribosomal stalk of the 50S ribosomal subunit. Interacts with L10 and the large rRNA to form the base of the stalk. L10 forms an elongated spine to which L12 dimers bind in a sequential fashion forming a multimeric L10(L12)X complex. One or more lysine residues are methylated.

Forms part of the ribosomal stalk which helps the ribosome interact with GTP-bound translation factors. The protein is Large ribosomal subunit protein uL11 of Rickettsia africae (strain ESF-5).